The chain runs to 852 residues: Thrombospondin type-1 domain-containing protein 1 (852 aa).

Positions 1–24 (MKPMLKDFSNLLLVVLCDYVLGEA) are cleaved as a signal peptide. The Extracellular segment spans residues 25–413 (EYLLLREPGH…QPQGPVKSNN (389 aa)). 7 N-linked (GlcNAc...) asparagine glycosylation sites follow: N39, N53, N58, N69, N80, N135, and N304. A TSP type-1 domain is found at 340-393 (TETWGLWQPWSQCSATCGDGVRERRRVCLTSFPSSPVCPGMSLEASLCSLEECA). 3 disulfide bridges follow: C352–C387, C356–C392, and C367–C377. The chain crosses the membrane as a helical span at residues 414–434 (IVTVTGISLCLFIIIATVLIT). The Cytoplasmic portion of the chain corresponds to 435–852 (LWRRFGRPAK…STLSVEKLVI (418 aa)). 2 disordered regions span residues 444–517 (KCST…ESFQ) and 624–799 (LIRK…RKDK). S463 carries the post-translational modification Phosphoserine. A compositionally biased stretch (basic residues) spans 645–654 (ARNAHFRRTA). The segment covering 655 to 669 (SFHEARQARPFRERS) has biased composition (basic and acidic residues). Over residues 670 to 685 (MSTLTPRQAPAYSSRT) the composition is skewed to polar residues. The span at 686–696 (RTCEQAEDRFR) shows a compositional bias: basic and acidic residues. Composition is skewed to polar residues over residues 766 to 778 (SHKSVSRKQSSPI) and 785 to 794 (QRVSSLSPSQ).

Part of a complex composed of THSD1, PTK2/FAK1, TLN1 and VCL. Interacts with TLN1.

The protein localises to the endosome membrane. It is found in the cell junction. It localises to the focal adhesion. Its subcellular location is the membrane. The protein resides in the secreted. In terms of biological role, is a positive regulator of nascent focal adhesion assembly, involved in the modulation of endothelial cell attachment to the extracellular matrix. This is Thrombospondin type-1 domain-containing protein 1 (THSD1) from Homo sapiens (Human).